The primary structure comprises 137 residues: Large ribosomal subunit protein uL16 (137 aa).

It belongs to the universal ribosomal protein uL16 family. Part of the 50S ribosomal subunit.

Functionally, binds 23S rRNA and is also seen to make contacts with the A and possibly P site tRNAs. The chain is Large ribosomal subunit protein uL16 from Tolumonas auensis (strain DSM 9187 / NBRC 110442 / TA 4).